Here is a 417-residue protein sequence, read N- to C-terminus: Cytochrome b-c1 complex subunit 2, mitochondrial (417 aa).

The N-terminal 22 residues, 1 to 22 (MTRGVPRLAVAARHFSTAEAAG), are a transit peptide targeting the mitochondrion.

It belongs to the peptidase M16 family. UQCRC2/QCR2 subfamily. As to quaternary structure, component of the ubiquinol-cytochrome c oxidoreductase (cytochrome b-c1 complex, complex III, CIII), a multisubunit enzyme composed of 3 respiratory subunits cytochrome b, cytochrome c1 and Rieske protein, 2 core protein subunits, and additional low-molecular weight protein subunits. The complex exists as an obligatory dimer and forms supercomplexes (SCs) in the inner mitochondrial membrane with cytochrome c oxidase (complex IV, CIV).

Its subcellular location is the mitochondrion inner membrane. Its function is as follows. Component of the ubiquinol-cytochrome c oxidoreductase, a multisubunit transmembrane complex that is part of the mitochondrial electron transport chain which drives oxidative phosphorylation. The respiratory chain contains 3 multisubunit complexes succinate dehydrogenase (complex II, CII), ubiquinol-cytochrome c oxidoreductase (cytochrome b-c1 complex, complex III, CIII) and cytochrome c oxidase (complex IV, CIV), that cooperate to transfer electrons derived from NADH and succinate to molecular oxygen, creating an electrochemical gradient over the inner membrane that drives transmembrane transport and the ATP synthase. The cytochrome b-c1 complex catalyzes electron transfer from ubiquinol to cytochrome c, linking this redox reaction to translocation of protons across the mitochondrial inner membrane, with protons being carried across the membrane as hydrogens on the quinol. In the process called Q cycle, 2 protons are consumed from the matrix, 4 protons are released into the intermembrane space and 2 electrons are passed to cytochrome c. The protein is Cytochrome b-c1 complex subunit 2, mitochondrial (QCR2) of Yarrowia lipolytica (strain CLIB 122 / E 150) (Yeast).